The chain runs to 246 residues: Mast cell protease 2 (246 aa).

Residues 1–19 form the signal peptide; sequence MHRPPLPLVLLLLCCRAQA. Positions 20-21 are cleaved as a propeptide — activation peptide; that stretch reads GE. In terms of domain architecture, Peptidase S1 spans 22–244; the sequence is IIGGTESKPH…YRPWIDEVLK (223 aa). C51 and C67 are oxidised to a cystine. Catalysis depends on charge relay system residues H66 and D109. N-linked (GlcNAc...) asparagine glycosylation occurs at N120. 2 cysteine pairs are disulfide-bonded: C143/C208 and C174/C187. The active-site Charge relay system is S202.

The protein belongs to the peptidase S1 family. Granzyme subfamily.

The protein localises to the secreted. Its subcellular location is the cytoplasmic granule. Functionally, putative mast cell chymase. The protein is Mast cell protease 2 of Ovis aries (Sheep).